The chain runs to 485 residues: Probable glycine dehydrogenase (decarboxylating) subunit 2 (485 aa).

Residue Lys-273 is modified to N6-(pyridoxal phosphate)lysine.

It belongs to the GcvP family. C-terminal subunit subfamily. The glycine cleavage system is composed of four proteins: P, T, L and H. In this organism, the P 'protein' is a heterodimer of two subunits. Pyridoxal 5'-phosphate serves as cofactor.

It carries out the reaction N(6)-[(R)-lipoyl]-L-lysyl-[glycine-cleavage complex H protein] + glycine + H(+) = N(6)-[(R)-S(8)-aminomethyldihydrolipoyl]-L-lysyl-[glycine-cleavage complex H protein] + CO2. Functionally, the glycine cleavage system catalyzes the degradation of glycine. The P protein binds the alpha-amino group of glycine through its pyridoxal phosphate cofactor; CO(2) is released and the remaining methylamine moiety is then transferred to the lipoamide cofactor of the H protein. The polypeptide is Probable glycine dehydrogenase (decarboxylating) subunit 2 (Oceanobacillus iheyensis (strain DSM 14371 / CIP 107618 / JCM 11309 / KCTC 3954 / HTE831)).